We begin with the raw amino-acid sequence, 776 residues long: Mitochondrial intermediate peptidase (776 aa).

The transit peptide at Met-1–Leu-38 directs the protein to the mitochondrion. His-560 is a Zn(2+) binding site. Glu-561 is a catalytic residue. His-564 and His-567 together coordinate Zn(2+).

This sequence belongs to the peptidase M3 family. The cofactor is Zn(2+).

Its subcellular location is the mitochondrion matrix. It catalyses the reaction Release of an N-terminal octapeptide as second stage of processing of some proteins imported into the mitochondrion.. Cleaves proteins, imported into the mitochondrion, to their mature size. While most mitochondrial precursor proteins are processed to the mature form in one step by mitochondrial processing peptidase (MPP), the sequential cleavage by MIP of an octapeptide after initial processing by MPP is a required step for a subgroup of nuclear-encoded precursor proteins destined for the matrix or the inner membrane. In Coprinopsis cinerea (strain Okayama-7 / 130 / ATCC MYA-4618 / FGSC 9003) (Inky cap fungus), this protein is Mitochondrial intermediate peptidase (OCT1).